Consider the following 276-residue polypeptide: Octopine-binding periplasmic protein (276 aa).

An N-terminal signal peptide occupies residues 1 to 20; it reads MKLKTILCAALLLVAGQAAA. Cys-57 and Cys-64 form a disulfide bridge.

It belongs to the bacterial solute-binding protein 3 family.

It localises to the periplasm. Its function is as follows. Component of the octopine active transport system probably consisting of four subunits: Q, M, P and T. The sequence is that of Octopine-binding periplasmic protein (occT) from Agrobacterium tumefaciens (strain Ach5).